The chain runs to 491 residues: Glycogen synthase (491 aa).

Position 15 (K15) interacts with ADP-alpha-D-glucose.

The protein belongs to the glycosyltransferase 1 family. Bacterial/plant glycogen synthase subfamily.

It catalyses the reaction [(1-&gt;4)-alpha-D-glucosyl](n) + ADP-alpha-D-glucose = [(1-&gt;4)-alpha-D-glucosyl](n+1) + ADP + H(+). The protein operates within glycan biosynthesis; glycogen biosynthesis. Synthesizes alpha-1,4-glucan chains using ADP-glucose. In Hydrogenovibrio crunogenus (strain DSM 25203 / XCL-2) (Thiomicrospira crunogena), this protein is Glycogen synthase.